The chain runs to 69 residues: DNA-directed RNA polymerase subunit epsilon (69 aa).

Belongs to the RNA polymerase subunit epsilon family. RNAP is composed of a core of 2 alpha, a beta and a beta' subunit. The core is associated with a delta subunit, and at least one of epsilon or omega. When a sigma factor is associated with the core the holoenzyme is formed, which can initiate transcription.

The enzyme catalyses RNA(n) + a ribonucleoside 5'-triphosphate = RNA(n+1) + diphosphate. Its function is as follows. A non-essential component of RNA polymerase (RNAP). This is DNA-directed RNA polymerase subunit epsilon from Halalkalibacterium halodurans (strain ATCC BAA-125 / DSM 18197 / FERM 7344 / JCM 9153 / C-125) (Bacillus halodurans).